A 160-amino-acid polypeptide reads, in one-letter code: Photosystem II extrinsic protein V (160 aa).

Positions methionine 1–alanine 25 are cleaved as a signal peptide. Residues cysteine 62, cysteine 65, histidine 66, and histidine 117 each contribute to the heme c site.

It belongs to the cytochrome c family. PsbV subfamily. As to quaternary structure, PSII is composed of 1 copy each of membrane proteins PsbA, PsbB, PsbC, PsbD, PsbE, PsbF, PsbH, PsbI, PsbJ, PsbK, PsbL, PsbM, PsbT, PsbX, PsbY, PsbZ, Psb30/Ycf12, peripheral proteins PsbO, CyanoQ (PsbQ), PsbU, PsbV and a large number of cofactors. It forms dimeric complexes. It depends on heme c as a cofactor.

The protein localises to the cellular thylakoid membrane. In terms of biological role, one of the extrinsic, lumenal subunits of photosystem II (PSII). PSII is a light-driven water plastoquinone oxidoreductase, using light energy to abstract electrons from H(2)O, generating a proton gradient subsequently used for ATP formation. The extrinsic proteins stabilize the structure of photosystem II oxygen-evolving complex (OEC), the ion environment of oxygen evolution and protect the OEC against heat-induced inactivation. Low-potential cytochrome c that plays a role in the OEC of PSII. The protein is Photosystem II extrinsic protein V of Rippkaea orientalis (strain PCC 8801 / RF-1) (Cyanothece sp. (strain PCC 8801)).